The primary structure comprises 583 residues: Ras-specific guanine nucleotide-releasing factor RalGPS2 (583 aa).

The 239-residue stretch at 49-287 folds into the Ras-GEF domain; that stretch reads TPEEYAGQIT…YKLSLKIEPG (239 aa). Residues 283–314 are disordered; the sequence is KIEPGTSTPRSAASREDLVGPEVGASPQSGRK. Phosphoserine occurs at positions 293, 296, 308, and 311. Residues 324-327 carry the PXXP motif; it reads PQTP. T326 bears the Phosphothreonine mark. 2 positions are modified to phosphoserine: S329 and S343. T361 is subject to Phosphothreonine. The disordered stretch occupies residues 372 to 406; it reads DDSVMEPHAPSRGQAESSTLSSGISIGSSDGSELS. Residue S374 is modified to Phosphoserine. The segment covering 387 to 403 has biased composition (low complexity); sequence ESSTLSSGISIGSSDGS. Phosphoserine is present on S422. Positions 457–569 constitute a PH domain; the sequence is AVTIQGVLRR…WFKHLSAACQ (113 aa). The required for stimulation of nucleotide exchange by RALA stretch occupies residues 459–583; sequence TIQGVLRRKT…QVPTNLMTFE (125 aa).

Interacts with the SH3 domains of GRB2 and PLCG1. Interacts with RALA.

The protein localises to the cytoplasm. It is found in the cell membrane. In terms of biological role, guanine nucleotide exchange factor for the small GTPase RALA. May be involved in cytoskeletal organization. May also be involved in the stimulation of transcription in a Ras-independent fashion. In Homo sapiens (Human), this protein is Ras-specific guanine nucleotide-releasing factor RalGPS2 (RALGPS2).